The following is a 303-amino-acid chain: uncharacterized protein (303 aa).

The protein localises to the cytoplasm. This is an uncharacterized protein from Saccharomyces cerevisiae (strain ATCC 204508 / S288c) (Baker's yeast).